We begin with the raw amino-acid sequence, 364 residues long: Probable dual-specificity RNA methyltransferase RlmN (364 aa).

Catalysis depends on Glu-106, which acts as the Proton acceptor. Residues 112 to 350 (YPRRNTVCIS…SCTVRDTRGR (239 aa)) enclose the Radical SAM core domain. A disulfide bond links Cys-119 and Cys-356. Positions 126, 130, and 133 each coordinate [4Fe-4S] cluster. S-adenosyl-L-methionine contacts are provided by residues 177–178 (GE), Ser-211, 234–236 (SLH), and Asn-313. The active-site S-methylcysteine intermediate is Cys-356.

It belongs to the radical SAM superfamily. RlmN family. [4Fe-4S] cluster serves as cofactor.

The protein resides in the cytoplasm. It catalyses the reaction adenosine(2503) in 23S rRNA + 2 reduced [2Fe-2S]-[ferredoxin] + 2 S-adenosyl-L-methionine = 2-methyladenosine(2503) in 23S rRNA + 5'-deoxyadenosine + L-methionine + 2 oxidized [2Fe-2S]-[ferredoxin] + S-adenosyl-L-homocysteine. It carries out the reaction adenosine(37) in tRNA + 2 reduced [2Fe-2S]-[ferredoxin] + 2 S-adenosyl-L-methionine = 2-methyladenosine(37) in tRNA + 5'-deoxyadenosine + L-methionine + 2 oxidized [2Fe-2S]-[ferredoxin] + S-adenosyl-L-homocysteine. Its function is as follows. Specifically methylates position 2 of adenine 2503 in 23S rRNA and position 2 of adenine 37 in tRNAs. The polypeptide is Probable dual-specificity RNA methyltransferase RlmN (Mycobacterium bovis (strain ATCC BAA-935 / AF2122/97)).